The following is a 520-amino-acid chain: Dihydropyrimidinase 2 (520 aa).

Zn(2+) contacts are provided by His-59, His-61, and Lys-152. Position 152 is an N6-carboxylysine (Lys-152). A substrate-binding site is contributed by Tyr-157. Residues His-185 and His-241 each coordinate Zn(2+). Position 291 (Ser-291) interacts with substrate. Asp-319 contacts Zn(2+). Asn-340 serves as a coordination point for substrate.

The protein belongs to the metallo-dependent hydrolases superfamily. Hydantoinase/dihydropyrimidinase family. As to quaternary structure, homotetramer. Zn(2+) serves as cofactor. Post-translationally, carboxylation allows a single lysine to coordinate two zinc ions. In terms of tissue distribution, body wall muscles.

It catalyses the reaction 5,6-dihydrouracil + H2O = 3-(carbamoylamino)propanoate + H(+). The polypeptide is Dihydropyrimidinase 2 (dhp-2) (Caenorhabditis elegans).